The chain runs to 292 residues: tRNA pseudouridine synthase B (292 aa).

D40 acts as the Nucleophile in catalysis.

The protein belongs to the pseudouridine synthase TruB family. Type 1 subfamily.

The catalysed reaction is uridine(55) in tRNA = pseudouridine(55) in tRNA. Responsible for synthesis of pseudouridine from uracil-55 in the psi GC loop of transfer RNAs. This chain is tRNA pseudouridine synthase B, found in Mycoplasma capricolum subsp. capricolum (strain California kid / ATCC 27343 / NCTC 10154).